The chain runs to 44 residues: MSDKPDMAEIEKFDKAKLKKTETQEKNPLPSKETIEQEKQTSES.

2 stretches are compositionally biased toward basic and acidic residues: residues Met1–Glu25 and Glu33–Ser44. The disordered stretch occupies residues Met1 to Ser44. Ser2 is subject to N-acetylserine.

It belongs to the thymosin beta family. As to expression, spleen, kidney, heart, and oocytes.

Its subcellular location is the cytoplasm. The protein localises to the cytoskeleton. In terms of biological role, plays an important role in the organization of the cytoskeleton. Binds to and sequesters actin monomers (G actin) and therefore inhibits actin polymerization. The sequence is that of Thymosin beta-4 (tmsb4) from Xenopus laevis (African clawed frog).